A 321-amino-acid polypeptide reads, in one-letter code: Nodulation protein D 1 (321 aa).

Positions 6 to 63 (LDLNLLVALDALMTERKLTAAARSINLSQPAMSAAITRLRTYFRDELFTMNGRELVPT) constitute an HTH lysR-type domain. Residues 23-42 (LTAAARSINLSQPAMSAAIT) constitute a DNA-binding region (H-T-H motif).

The protein belongs to the LysR transcriptional regulatory family.

Its function is as follows. NodD regulates the expression of the nodABCFE genes which encode other nodulation proteins. NodD is also a negative regulator of its own expression. Binds flavonoids as inducers. The protein is Nodulation protein D 1 (nodD1) of Bradyrhizobium japonicum.